A 321-amino-acid polypeptide reads, in one-letter code: Lipoyl synthase (321 aa).

Residues Cys68, Cys73, Cys79, Cys94, Cys98, Cys101, and Ser308 each contribute to the [4Fe-4S] cluster site. One can recognise a Radical SAM core domain in the interval 80 to 297; that stretch reads FNHGTATFMI…KEIALELGFT (218 aa).

The protein belongs to the radical SAM superfamily. Lipoyl synthase family. Requires [4Fe-4S] cluster as cofactor.

The protein localises to the cytoplasm. It carries out the reaction [[Fe-S] cluster scaffold protein carrying a second [4Fe-4S](2+) cluster] + N(6)-octanoyl-L-lysyl-[protein] + 2 oxidized [2Fe-2S]-[ferredoxin] + 2 S-adenosyl-L-methionine + 4 H(+) = [[Fe-S] cluster scaffold protein] + N(6)-[(R)-dihydrolipoyl]-L-lysyl-[protein] + 4 Fe(3+) + 2 hydrogen sulfide + 2 5'-deoxyadenosine + 2 L-methionine + 2 reduced [2Fe-2S]-[ferredoxin]. Its pathway is protein modification; protein lipoylation via endogenous pathway; protein N(6)-(lipoyl)lysine from octanoyl-[acyl-carrier-protein]: step 2/2. In terms of biological role, catalyzes the radical-mediated insertion of two sulfur atoms into the C-6 and C-8 positions of the octanoyl moiety bound to the lipoyl domains of lipoate-dependent enzymes, thereby converting the octanoylated domains into lipoylated derivatives. The sequence is that of Lipoyl synthase from Aliivibrio fischeri (strain MJ11) (Vibrio fischeri).